Here is a 403-residue protein sequence, read N- to C-terminus: Ribonuclease T2-like (403 aa).

The signal sequence occupies residues 1 to 19; the sequence is MLALILTISICIFLKGSTC. 4 cysteine pairs are disulfide-bonded: C36/C55, C44/C91, C54/C158, and C99/C150. The N-linked (GlcNAc...) asparagine glycan is linked to N78. Catalysis depends on residues H84, E143, and H147. N-linked (GlcNAc...) asparagine glycosylation is present at N175. Cysteines 224 and 259 form a disulfide. Positions 268–288 are disordered; that stretch reads PKNGFNPGPQPPKSPRKGYLE.

The protein belongs to the RNase T2 family.

The protein localises to the vacuole lumen. It localises to the cytoplasm. It carries out the reaction a ribonucleotidyl-ribonucleotide-RNA + H2O = a 3'-end 3'-phospho-ribonucleotide-RNA + a 5'-end dephospho-ribonucleoside-RNA + H(+). Its function is as follows. Rnase which modulates cell survival under stress conditions. Released from the vacuole to the cytoplasm during stress to promote tRNA and rRNA cleavage and to activate separately a downstream pathway that promotes cell death. Involved in cell size, vacuolar morphology and growth at high temperatures and high salt concentration. The chain is Ribonuclease T2-like (RNY1) from Debaryomyces hansenii (strain ATCC 36239 / CBS 767 / BCRC 21394 / JCM 1990 / NBRC 0083 / IGC 2968) (Yeast).